Reading from the N-terminus, the 362-residue chain is Lactosylceramide alpha-2,3-sialyltransferase (362 aa).

Topologically, residues 1–5 (MRRPS) are cytoplasmic. Residues 6-26 (LLLKDILKCTLLVFGVWILYI) form a helical; Signal-anchor for type II membrane protein membrane-spanning segment. The Lumenal portion of the chain corresponds to 27–362 (LKLNYTTEEC…DLSGGIDREF (336 aa)). N30, N180, N224, and N334 each carry an N-linked (GlcNAc...) asparagine glycan. A disulfide bridge links C139 with C297.

This sequence belongs to the glycosyltransferase 29 family.

Its subcellular location is the golgi apparatus membrane. It carries out the reaction a beta-D-Gal-(1-&gt;4)-beta-D-Glc-(1&lt;-&gt;1)-Cer(d18:1(4E)) + CMP-N-acetyl-beta-neuraminate = a ganglioside GM3 (d18:1(4E)) + CMP + H(+). The enzyme catalyses ganglioside GA2 (d18:1(4E)/18:0) + CMP-N-acetyl-beta-neuraminate = ganglioside GM2 (d18:1(4E)/18:0) + CMP + H(+). The catalysed reaction is a beta-D-Gal-(1&lt;-&gt;1')-ceramide + CMP-N-acetyl-beta-neuraminate = N-acetyl-alpha-neuraminosyl-(2-&gt;3)-beta-D-galactosyl-(1&lt;-&gt;1')-ceramide + CMP + H(+). It catalyses the reaction ganglioside GA1 (d18:1(4E)/18:0) + CMP-N-acetyl-beta-neuraminate = ganglioside GM1 (d18:1(4E)/18:0) + CMP + H(+). In terms of biological role, transfers the sialyl group (N-acetyl-alpha-neuraminyl or NeuAc) from CMP-NeuAc to the non-reducing terminal galactose (Gal) of glycosphingolipids forming gangliosides (important molecules involved in the regulation of multiple cellular processes, including cell proliferation and differentiation, apoptosis, embryogenesis, development, and oncogenesis). Mainly involved in the biosynthesis of ganglioside GM3 but can also use different glycolipids as substrate acceptors such as D-galactosylceramide (GalCer), asialo-GM2 (GA2) and asialo-GM1 (GA1), although less preferentially than beta-D-Gal-(1-&gt;4)-beta-D-Glc-(1&lt;-&gt;1)-Cer (LacCer). The protein is Lactosylceramide alpha-2,3-sialyltransferase (ST3GAL5) of Pan troglodytes (Chimpanzee).